The primary structure comprises 228 residues: MLHVEMLTLVFLVLWMCVFSQDPGSKAVADRYAVYWNSSNPRFQRGDYHIDVCINDYLDVFCPHYEDSVPEDKTERYVLYMVNFDGYSACDHTSKGFKRWECNRPHSPNGPLKFSEKFQLFTPFSLGFEFRPGREYFYISSAIPDNGRRSCLKLKVFVRPTNSCMKTIGVHDRVFDVNDKVENSLEPADDTVHESAEPSRGENAAQTPRIPSRLLAILLFLLAMLLTL.

A signal peptide spans 1–20; the sequence is MLHVEMLTLVFLVLWMCVFS. In terms of domain architecture, Ephrin RBD spans 29-162; sequence ADRYAVYWNS…KLKVFVRPTN (134 aa). The N-linked (GlcNAc...) asparagine glycan is linked to Asn-37. Disulfide bonds link Cys-62–Cys-102 and Cys-90–Cys-151. The disordered stretch occupies residues 186-205; sequence EPADDTVHESAEPSRGENAA. Positions 190-200 are enriched in basic and acidic residues; the sequence is DTVHESAEPSR. Asn-203 carries GPI-anchor amidated asparagine lipidation. A propeptide spans 204-228 (removed in mature form); it reads AAQTPRIPSRLLAILLFLLAMLLTL.

This sequence belongs to the ephrin family. In terms of assembly, binds to EPHB2. Interacts with EPHA8; activates EPHA8. Binds to the receptor tyrosine kinases EPHA2, EPHA3 and EPHB1. Forms a ternary EFNA5-EPHA3-ADAM10 complex mediating EFNA5 extracellular domain shedding by ADAM10 which regulates the EFNA5-EPHA3 complex internalization and function.

The protein resides in the cell membrane. Its subcellular location is the membrane. It is found in the caveola. Cell surface GPI-bound ligand for Eph receptors, a family of receptor tyrosine kinases which are crucial for migration, repulsion and adhesion during neuronal, vascular and epithelial development. Binds promiscuously Eph receptors residing on adjacent cells, leading to contact-dependent bidirectional signaling into neighboring cells. The signaling pathway downstream of the receptor is referred to as forward signaling while the signaling pathway downstream of the ephrin ligand is referred to as reverse signaling. Induces compartmentalized signaling within a caveolae-like membrane microdomain when bound to the extracellular domain of its cognate receptor. This signaling event requires the activity of the Fyn tyrosine kinase. Activates the EPHA3 receptor to regulate cell-cell adhesion and cytoskeletal organization. With the receptor EPHA2 may regulate lens fiber cells shape and interactions and be important for lens transparency maintenance. May function actively to stimulate axon fasciculation. The interaction of EFNA5 with EPHA5 also mediates communication between pancreatic islet cells to regulate glucose-stimulated insulin secretion. Cognate/functional ligand for EPHA7, their interaction regulates brain development modulating cell-cell adhesion and repulsion. The chain is Ephrin-A5 (EFNA5) from Homo sapiens (Human).